Reading from the N-terminus, the 415-residue chain is Mitochondrial distribution and morphology protein 12 (415 aa).

One can recognise an SMP-LTD domain in the interval 1–402; that stretch reads MSFDINWSEL…WPSWVCFDLN (402 aa). Residues 53–146 form a disordered region; sequence EITIRHIGDP…PPLTDLRRSR (94 aa). 2 stretches are compositionally biased toward acidic residues: residues 62–75 and 92–103; these read PFDD…DDDE and NSSDDDEDDEYD.

Belongs to the MDM12 family. In terms of assembly, component of the ER-mitochondria encounter structure (ERMES) or MDM complex, composed of MMM1, MDM10, MDM12 and MDM34. An MMM1 homodimer associates with one molecule of MDM12 on each side in a pairwise head-to-tail manner, and the SMP-LTD domains of MMM1 and MDM12 generate a continuous hydrophobic tunnel for phospholipid trafficking.

The protein resides in the mitochondrion outer membrane. It localises to the endoplasmic reticulum membrane. In terms of biological role, component of the ERMES/MDM complex, which serves as a molecular tether to connect the endoplasmic reticulum (ER) and mitochondria. Components of this complex are involved in the control of mitochondrial shape and protein biogenesis, and function in nonvesicular lipid trafficking between the ER and mitochondria. MDM12 is required for the interaction of the ER-resident membrane protein MMM1 and the outer mitochondrial membrane-resident beta-barrel protein MDM10. The MDM12-MMM1 subcomplex functions in the major beta-barrel assembly pathway that is responsible for biogenesis of all mitochondrial outer membrane beta-barrel proteins, and acts in a late step after the SAM complex. The MDM10-MDM12-MMM1 subcomplex further acts in the TOM40-specific pathway after the action of the MDM12-MMM1 complex. Essential for establishing and maintaining the structure of mitochondria and maintenance of mtDNA nucleoids. In Debaryomyces hansenii (strain ATCC 36239 / CBS 767 / BCRC 21394 / JCM 1990 / NBRC 0083 / IGC 2968) (Yeast), this protein is Mitochondrial distribution and morphology protein 12.